We begin with the raw amino-acid sequence, 238 residues long: MSDKKRVLVKFSGEALAGGNGFGIDTHILKYIAGEIKGLVLNGIEIGIVIGGGNIIRGVSAAKDGIIKRTSGDHMGMLATVINAIAMREALEYSGLSVRVQSAIKMEAICETFIMGRAQRHLEKGRVVIFAAGTGNPFFTTDTAATLRAIEIDANMIIKATKVNGVYDRDPMKFEDAVLLNEISYERAMEDNIKVMDDTAIALAKDNKLPIVVCNMFEEGNLLKIANGDYTNCSVVKN.

An ATP-binding site is contributed by 10-13 (KFSG). The involved in allosteric activation by GTP stretch occupies residues 18-23 (GGNGFG). Gly52 contacts UMP. 2 residues coordinate ATP: Gly53 and Arg57. Residues Asp73 and 134–141 (TGNPFFTT) each bind UMP. The ATP site is built by Thr161, Tyr167, and Asp170.

This sequence belongs to the UMP kinase family. As to quaternary structure, homohexamer.

Its subcellular location is the cytoplasm. The enzyme catalyses UMP + ATP = UDP + ADP. It participates in pyrimidine metabolism; CTP biosynthesis via de novo pathway; UDP from UMP (UMPK route): step 1/1. Allosterically activated by GTP. Inhibited by UTP. Catalyzes the reversible phosphorylation of UMP to UDP. In Campylobacter fetus subsp. fetus (strain 82-40), this protein is Uridylate kinase.